The primary structure comprises 410 residues: Peptide chain release factor subunit 1 (410 aa).

This sequence belongs to the eukaryotic release factor 1 family. As to quaternary structure, heterodimer of two subunits, one of which binds GTP.

The protein localises to the cytoplasm. Its function is as follows. Directs the termination of nascent peptide synthesis (translation) in response to the termination codons UAA, UAG and UGA. The chain is Peptide chain release factor subunit 1 from Picrophilus torridus (strain ATCC 700027 / DSM 9790 / JCM 10055 / NBRC 100828 / KAW 2/3).